The primary structure comprises 287 residues: HTH-type transcriptional regulator MurR (287 aa).

Residues 1-77 (MLYLAKMRNA…MALIEEHSVS (77 aa)) form the HTH rpiR-type domain. A DNA-binding region (H-T-H motif) is located at residues 37–56 (SRNMAKQLEISQSSIVKFAQ). One can recognise an SIS domain in the interval 128-268 (VINLISKAPL…FVGMVQLNDV (141 aa)).

As to quaternary structure, homotetramer.

The protein operates within amino-sugar metabolism; N-acetylmuramate degradation [regulation]. Its function is as follows. Represses the expression of the murPQ operon involved in the uptake and degradation of N-acetylmuramic acid (MurNAc). Binds to two adjacent inverted repeats within the operator region. MurNAc 6-phosphate, the substrate of MurQ, is the specific inducer that weakens binding of MurR to the operator. This is HTH-type transcriptional regulator MurR from Salmonella arizonae (strain ATCC BAA-731 / CDC346-86 / RSK2980).